The primary structure comprises 178 residues: MSGGKYVDSEGHLYTVPIREQGNIYKPNNKAMADELSEKQVYDAHTKEIDLVNRDPKHLNDDVVKIDFEDVIAEPEGTHSFDGIWKASFTTFTVTKYWFYRLLSALFGIPMALIWGIYFAILSFLHIWAVVPCIKSFLIEIQCISRVYSIYIHTVCDPLFEAIGKIFSNVRIGLQKEI.

The residue at position 2 (Ser-2) is an N-acetylserine. Ser-2 carries the phosphoserine modification. Residues 2 to 94 are required for homooligomerization; it reads SGGKYVDSEG…WKASFTTFTV (93 aa). Residues 2 to 104 are Cytoplasmic-facing; the sequence is SGGKYVDSEG…TKYWFYRLLS (103 aa). Residue Lys-5 is modified to N6-acetyllysine; alternate. Lys-5 is covalently cross-linked (Glycyl lysine isopeptide (Lys-Gly) (interchain with G-Cter in ubiquitin); alternate). At Tyr-6 the chain carries Phosphotyrosine. The residue at position 9 (Ser-9) is a Phosphoserine. Phosphotyrosine; by ABL1 is present on Tyr-14. A Phosphotyrosine modification is found at Tyr-25. Glycyl lysine isopeptide (Lys-Gly) (interchain with G-Cter in ubiquitin) cross-links involve residues Lys-26 and Lys-30. Residue Ser-37 is modified to Phosphoserine. Residues Lys-39, Lys-47, and Lys-57 each participate in a glycyl lysine isopeptide (Lys-Gly) (interchain with G-Cter in ubiquitin) cross-link. Residues 82 to 94 are interaction with CAVIN3; it reads DGIWKASFTTFTV. Positions 105–125 form an intramembrane region, helical; it reads ALFGIPMALIWGIYFAILSFL. The Cytoplasmic portion of the chain corresponds to 126-178; that stretch reads HIWAVVPCIKSFLIEIQCISRVYSIYIHTVCDPLFEAIGKIFSNVRIGLQKEI. An interacts with SPRY1, SPRY2, SPRY3 and SPRY4 region spans residues 131–142; it reads VPCIKSFLIEIQ. 3 S-palmitoyl cysteine lipidation sites follow: Cys-133, Cys-143, and Cys-156. The interacts with SPRY1, SPRY2, and SPRY4 stretch occupies residues 149-160; the sequence is SIYIHTVCDPLF. Residues 167-178 form an interacts with SPRY1, SPRY2, SPRY3 and SPRY4 region; the sequence is FSNVRIGLQKEI.

This sequence belongs to the caveolin family. Homooligomer. Interacts with GLIPR2. Interacts with NOSTRIN. Interacts with SNAP25 and STX1A. Interacts (via the N-terminus) with DPP4; the interaction is direct. Interacts with CTNNB1, CDH1 and JUP. Interacts with PACSIN2; this interaction induces membrane tubulation. Interacts with SLC7A9. Interacts with BMX and BTK. Interacts with TGFBR1. Interacts with CAVIN3 (via leucine-zipper domain) in a cholesterol-sensitive manner. Interacts with CAVIN1. Interacts with EHD2 in a cholesterol-dependent manner. Forms a ternary complex with UBXN6 and VCP; mediates CAV1 targeting to lysosomes for degradation. Interacts with ABCG1; this interaction regulates ABCG1-mediated cholesterol efflux. Interacts with NEU3; this interaction enhances NEU3 sialidase activity within caveola. Interacts (via C-terminus) with SPRY1, SPRY2 (via C-terminus), SPRY3, and SPRY4. Interacts with IGFBP5; this interaction allows trafficking of IGFBP5 from the plasma membrane to the nucleus. Post-translationally, phosphorylated at Tyr-14 by ABL1 in response to oxidative stress. In terms of processing, ubiquitinated. Undergo monoubiquitination and multi- and/or polyubiquitination. Monoubiquitination of N-terminal lysines promotes integration in a ternary complex with UBXN6 and VCP which promotes oligomeric CAV1 targeting to lysosomes for degradation. Ubiquitinated by ZNRF1; leading to degradation and modulation of the TLR4-mediated immune response.

It localises to the golgi apparatus membrane. The protein localises to the cell membrane. It is found in the membrane. The protein resides in the caveola. Its subcellular location is the membrane raft. Its function is as follows. May act as a scaffolding protein within caveolar membranes. Forms a stable heterooligomeric complex with CAV2 that targets to lipid rafts and drives caveolae formation. Mediates the recruitment of CAVIN proteins (CAVIN1/2/3/4) to the caveolae. Interacts directly with G-protein alpha subunits and can functionally regulate their activity. Involved in the costimulatory signal essential for T-cell receptor (TCR)-mediated T-cell activation. Its binding to DPP4 induces T-cell proliferation and NF-kappa-B activation in a T-cell receptor/CD3-dependent manner. Recruits CTNNB1 to caveolar membranes and may regulate CTNNB1-mediated signaling through the Wnt pathway. Negatively regulates TGFB1-mediated activation of SMAD2/3 by mediating the internalization of TGFBR1 from membrane rafts leading to its subsequent degradation. Binds 20(S)-hydroxycholesterol (20(S)-OHC). In Saimiri boliviensis boliviensis (Bolivian squirrel monkey), this protein is Caveolin-1 (CAV1).